The following is a 326-amino-acid chain: uncharacterized protein (326 aa).

Residue S132 participates in substrate binding. Y157 functions as the Proton acceptor in the catalytic mechanism.

It belongs to the NAD(P)-dependent epimerase/dehydratase family. dTDP-glucose dehydratase subfamily.

This is an uncharacterized protein from Methanocaldococcus jannaschii (strain ATCC 43067 / DSM 2661 / JAL-1 / JCM 10045 / NBRC 100440) (Methanococcus jannaschii).